A 236-amino-acid chain; its full sequence is MATTHLDVCAVVPAAGFGRRMQTECPKQYLSIGNQTILEHSVHALLAHPRVKRVVIAISPGDSRFAQLPLANHPQITVVDGGDERADSVLAGLKAAGDAQWVLVHDAARPCLHQDDLARLLALSETSRTGGILAAPVRDTMKRAEPGKNAIAHTVDRNGLWHALTPQFFPRELLHDCLTRALNEGATITDEASALEYCGFHPQLVEGRADNIKVTRPEDLALAEFYLTRTIHQENT.

Belongs to the IspD/TarI cytidylyltransferase family. IspD subfamily. Homodimer.

The enzyme catalyses 2-C-methyl-D-erythritol 4-phosphate + CTP + H(+) = 4-CDP-2-C-methyl-D-erythritol + diphosphate. The protein operates within isoprenoid biosynthesis; isopentenyl diphosphate biosynthesis via DXP pathway; isopentenyl diphosphate from 1-deoxy-D-xylulose 5-phosphate: step 2/6. In terms of biological role, catalyzes the formation of 4-diphosphocytidyl-2-C-methyl-D-erythritol from CTP and 2-C-methyl-D-erythritol 4-phosphate (MEP). The protein is 2-C-methyl-D-erythritol 4-phosphate cytidylyltransferase of Escherichia coli O139:H28 (strain E24377A / ETEC).